The chain runs to 446 residues: Radical S-adenosyl methionine domain-containing protein 1, mitochondrial (446 aa).

A Radical SAM core domain is found at 15–277 (KGYNKLKDLP…VCEAEAMGFQ (263 aa)). Positions 34, 38, and 41 each coordinate [4Fe-4S] cluster. Residues glycine 94, 95-96 (GT), glutamate 130, glutamine 159, arginine 171, and aspartate 195 contribute to the S-adenosyl-L-methionine site.

Belongs to the anaerobic coproporphyrinogen-III oxidase family. HemW subfamily.

It localises to the mitochondrion. Its function is as follows. May be a heme chaperone, appears to bind heme. Homologous bacterial proteins do not have oxygen-independent coproporphyrinogen-III oxidase activity. Binds 1 [4Fe-4S] cluster. The cluster is coordinated with 3 cysteines and an exchangeable S-adenosyl-L-methionine. In Dictyostelium discoideum (Social amoeba), this protein is Radical S-adenosyl methionine domain-containing protein 1, mitochondrial (rsad1).